The sequence spans 251 residues: Transcriptional cofactor Bfc (251 aa).

As to quaternary structure, interacts with srp (via GATA-type Zn-finger domain); this interaction enhances srp binding to the promoter of crq/croquemort.

Its subcellular location is the nucleus. Transcriptional cofactor involved in efferocytosis. Together with srp mediates expression of the phagocytic receptor crq/croquemort in response to apoptotic cells, and is up-regulated by crq/croquemort in a positive feedback mechanism. Involved in macrophage engulfment and clearance of apoptotic cells during embryogenesis. This Drosophila melanogaster (Fruit fly) protein is Transcriptional cofactor Bfc.